Reading from the N-terminus, the 308-residue chain is Apolipoprotein E (308 aa).

An N-terminal signal peptide occupies residues 1–18 (MKFLWAALVVTLLAGCQA). 8 tandem repeats follow at residues 75–96 (LLIE…KQVG), 97–118 (PIAQ…ARLE), 119–140 (SDME…AALG), 141–162 (QNTD…KRLL), 163–184 (RDAE…EAAE), 185–206 (RGVS…LQAI), 207–224 (PPSQ…QKVR), and 225–246 (GRLE…DQME). Positions 75 to 246 (LLIEETMKEV…RLDDVRDQME (172 aa)) are 8 X 22 AA approximate tandem repeats. The LDL and other lipoprotein receptors binding stretch occupies residues 153-163 (HLRKLRKRLLR). 157 to 160 (LRKR) is a binding site for heparin. The segment at 205–281 (AIPPSQQLRE…SWFEPLVQDM (77 aa)) is lipid-binding and lipoprotein association. 220–227 (GQKVRGRL) is a heparin binding site. The homooligomerization stretch occupies residues 257-308 (SQVRLQAEAFQTRLKSWFEPLVQDMQRQWASLVEKVQSSLGISPSTKPSKTK). The interval 269 to 281 (RLKSWFEPLVQDM) is specificity for association with VLDL.

Belongs to the apolipoprotein A1/A4/E family. As to quaternary structure, homotetramer. May interact with ABCA1; functionally associated with ABCA1 in the biogenesis of HDLs. May interact with APP/A4 amyloid-beta peptide; the interaction is extremely stable in vitro but its physiological significance is unclear. May interact with MAPT. May interact with MAP2. In the cerebrospinal fluid, interacts with secreted SORL1. Interacts with PMEL; this allows the loading of PMEL luminal fragment on ILVs to induce fibril nucleation. APOE exists as multiple glycosylated and sialylated glycoforms within cells and in plasma. The extent of glycosylation and sialylation are tissue and context specific. Post-translationally, glycated in plasma VLDL. In terms of processing, phosphorylated by FAM20C in the extracellular medium.

The protein localises to the secreted. It localises to the extracellular space. Its subcellular location is the extracellular matrix. The protein resides in the extracellular vesicle. It is found in the endosome. The protein localises to the multivesicular body. In terms of biological role, APOE is an apolipoprotein, a protein associating with lipid particles, that mainly functions in lipoprotein-mediated lipid transport between organs via the plasma and interstitial fluids. APOE is a core component of plasma lipoproteins and is involved in their production, conversion and clearance. Apolipoproteins are amphipathic molecules that interact both with lipids of the lipoprotein particle core and the aqueous environment of the plasma. As such, APOE associates with chylomicrons, chylomicron remnants, very low density lipoproteins (VLDL) and intermediate density lipoproteins (IDL) but shows a preferential binding to high-density lipoproteins (HDL). It also binds a wide range of cellular receptors including the LDL receptor/LDLR and the very low-density lipoprotein receptor/VLDLR that mediate the cellular uptake of the APOE-containing lipoprotein particles. Finally, APOE also has a heparin-binding activity and binds heparan-sulfate proteoglycans on the surface of cells, a property that supports the capture and the receptor-mediated uptake of APOE-containing lipoproteins by cells. In Pteropus alecto (Black flying fox), this protein is Apolipoprotein E (APOE).